The sequence spans 200 residues: Eukaryotic translation initiation factor isoform 4E (200 aa).

A disordered region spans residues 1–22 (MATEAPIEATEVPPASATETVA). Residues 44–49 (QGAAWG), Lys-76, and 94–95 (WE) each bind mRNA. Cysteines 99 and 138 form a disulfide. MRNA-binding positions include 145-150 (RRSQDK) and 189-192 (KRER).

This sequence belongs to the eukaryotic initiation factor 4E family. In terms of assembly, EIF4F is a multi-subunit complex, the composition of which varies with external and internal environmental conditions. It is composed of at least EIF4A, EIF4E and EIF4G. EIF4E is also known to interact with other partners. In higher plants two isoforms of EIF4F have been identified, named isoform EIF4F and isoform EIF(iso)4F. Isoform EIF4F has subunits p220 and p26, whereas isoform EIF(iso)4F has subunits p82 and p28. (Microbial infection) Interacts with viral genome-linked protein (VPg); this interaction is possible in susceptible hosts but impaired in resistant plants. In terms of processing, according to the redox status, the Cys-99-Cys-138 disulfide bridge may have a role in regulating protein function by affecting its ability to bind capped mRNA. In terms of tissue distribution, expressed ubiquitously in seedlings, roots, leaves, sepals, petals, anthers and dehisced pollen, with highest levels in pollen, maturing anthers and roots. Strongly expressed in susceptible plants but not in resistant ones.

The protein localises to the cytoplasm. Its subcellular location is the nucleus. Its function is as follows. Component of the protein complex eIF4F, which is involved in the recognition of the mRNA cap, ATP-dependent unwinding of 5'-terminal secondary structure and recruitment of mRNA to the ribosome. Recognizes and binds the 7-methylguanosine-containing mRNA cap during an early step in the initiation of protein synthesis and facilitates ribosome binding by inducing the unwinding of the mRNAs secondary structures. Key component of recessive resistance to potyviruses. In terms of biological role, (Microbial infection) Susceptibility host factor required for viral infection (e.g. potato virus Y (PVY) and pepper mottle virus (PepMoV)) by recruiting viral RNAs to the host ribosomal complex via an interaction with viral genome-linked protein (VPg). This Nicotiana tabacum (Common tobacco) protein is Eukaryotic translation initiation factor isoform 4E.